Here is a 584-residue protein sequence, read N- to C-terminus: Beta-(1--&gt;2)glucan export ATP-binding/permease protein NdvA (584 aa).

One can recognise an ABC transmembrane type-1 domain in the interval valine 21–glutamate 301. Transmembrane regions (helical) follow at residues isoleucine 29 to isoleucine 49, aspartate 57 to alanine 77, threonine 136 to valine 156, leucine 158 to aspartate 178, isoleucine 248 to glycine 268, and valine 272 to methionine 292. The 235-residue stretch at valine 335–threonine 569 folds into the ABC transporter domain. Position 368 to 375 (glycine 368 to threonine 375) interacts with ATP.

Belongs to the ABC transporter superfamily. Beta-(1--&gt;2)glucan exporter (TC 3.A.1.108.1) family. As to quaternary structure, homodimer.

It is found in the cell inner membrane. It carries out the reaction [(1-&gt;2)-beta-D-glucosyl](n)(in) + ATP + H2O = [(1-&gt;2)-beta-D-glucosyl](n)(out) + ADP + phosphate + H(+). Functionally, involved in beta-(1--&gt;2)glucan export. Transmembrane domains (TMD) form a pore in the inner membrane and the ATP-binding domain (NBD) is responsible for energy generation. This is Beta-(1--&gt;2)glucan export ATP-binding/permease protein NdvA from Agrobacterium vitis (Rhizobium vitis).